Consider the following 515-residue polypeptide: Nectin-1 (515 aa).

Residues 1–30 (MARMGLAGAAGRWWGLALGLTAFFLPGAHT) form the signal peptide. The 111-residue stretch at 31–141 (QVVQVNDSMY…GNRESQLNLT (111 aa)) folds into the Ig-like V-type domain. Over 31–355 (QVVQVNDSMY…GRRAGQVPTA (325 aa)) the chain is Extracellular. Residues asparagine 36, asparagine 72, asparagine 139, asparagine 202, asparagine 286, asparagine 297, asparagine 307, and asparagine 332 are each glycosylated (N-linked (GlcNAc...) asparagine). A disulfide bridge links cysteine 51 with cysteine 124. 2 Ig-like C2-type domains span residues 145 to 243 (KPTN…TLNV) and 247 to 334 (PEVT…VNIT). Intrachain disulfides connect cysteine 172/cysteine 226 and cysteine 269/cysteine 316. The tract at residues 282 to 299 (WTTLNGSLPKGVEAQNRT) is interaction with FGFR. Residues 356–376 (IIGGVVGSILLVLFVVGGIVV) form a helical membrane-spanning segment. The Cytoplasmic segment spans residues 377–515 (ALCRRRHTFK…SFISKKEWYV (139 aa)). Residues 400-486 (YSKAGIPQHH…DGYGDRTLGY (87 aa)) are disordered. 3 positions are modified to phosphoserine: serine 422, serine 434, and serine 435. Tyrosine 436 carries the post-translational modification Phosphotyrosine. Residues 436–445 (YEEEEEEEGG) are compositionally biased toward acidic residues. Residues 446–464 (GGERKVGGPHPKYDEDAKR) show a composition bias toward basic and acidic residues. Position 509 is a phosphoserine (serine 509).

Belongs to the nectin family. In terms of assembly, (Microbial infection) Interacts with herpes pseudorabies virus/PRV envelope glycoprotein D.

It localises to the cell membrane. The protein localises to the cell junction. Its subcellular location is the adherens junction. The protein resides in the presynaptic cell membrane. Its function is as follows. (Microbial infection) Acts as a receptor for herpes simplex virus 1/HHV-1, herpes simplex virus 2/HHV-2, and pseudorabies virus/PRV. This chain is Nectin-1, found in Sus scrofa (Pig).